A 144-amino-acid polypeptide reads, in one-letter code: MLQPKKTKFRKAFKGRIHGLAKGGTDLNFGSYGLKALEPERVTARQIEAARRAITRHIRRQGRLWIRVFPDVPVSKKPAEVRQGKGKGSIEYWAARVKPGRILFELDGVPGPLAAEAFSRAAMKLPIKTKVVARLGDTSHLAGE.

Belongs to the universal ribosomal protein uL16 family. Part of the 50S ribosomal subunit.

Binds 23S rRNA and is also seen to make contacts with the A and possibly P site tRNAs. The sequence is that of Large ribosomal subunit protein uL16 from Novosphingobium aromaticivorans (strain ATCC 700278 / DSM 12444 / CCUG 56034 / CIP 105152 / NBRC 16084 / F199).